A 419-amino-acid chain; its full sequence is Protein arginine N-methyltransferase 8-B (419 aa).

The segment covering 1 to 14 (MGLRHSSRCLLLRR) has biased composition (basic residues). The interval 1–79 (MGLRHSSRCL…HTPHVSALSA (79 aa)) is disordered. Gly2 is lipidated: N-myristoyl glycine. A compositionally biased stretch (low complexity) spans 33-63 (QHQQQQSISSIPSSQSLQPSPLPKPVTSVHH). Position 83 is an omega-N-methylarginine (Arg83). Arg98 carries the post-translational modification Asymmetric dimethylarginine. Residues 98–402 (RDYYFDSYAH…RDLDFTFELD (305 aa)) enclose the SAM-dependent MTase PRMT-type domain. Residues His111, Arg120, Gly144, 144-147 (GSGT), Glu166, and Glu195 contribute to the S-adenosyl-L-methionine site. Catalysis depends on residues Glu210 and Glu219.

This sequence belongs to the class I-like SAM-binding methyltransferase superfamily. Protein arginine N-methyltransferase family. PRMT8 subfamily. In terms of assembly, homodimer. Tetramer; individual homodimers associates to form a homotetramer. Homooctamer; individual homodimers associates to form a homooctamer and homooligomerization is required for proper localization to the cell membrane.

It is found in the cell membrane. It catalyses the reaction L-arginyl-[protein] + S-adenosyl-L-methionine = N(omega)-methyl-L-arginyl-[protein] + S-adenosyl-L-homocysteine + H(+). The catalysed reaction is L-arginyl-[protein] + 2 S-adenosyl-L-methionine = N(omega),N(omega)-dimethyl-L-arginyl-[protein] + 2 S-adenosyl-L-homocysteine + 2 H(+). In terms of biological role, S-adenosyl-L-methionine-dependent and membrane-associated arginine methyltransferase that can both catalyze the formation of omega-N monomethylarginine (MMA) and asymmetrical dimethylarginine (aDMA). The sequence is that of Protein arginine N-methyltransferase 8-B (prmt8b) from Danio rerio (Zebrafish).